Consider the following 197-residue polypeptide: HTH-type transcriptional regulator BetI (197 aa).

Positions 8-68 constitute an HTH tetR-type domain; that stretch reads PIRRQQLIEA…ATMRYLMNAL (61 aa). Positions 31–50 form a DNA-binding region, H-T-H motif; it reads SIALIARLAGVSNGIISHYF.

Its pathway is amine and polyamine biosynthesis; betaine biosynthesis via choline pathway [regulation]. Its function is as follows. Repressor involved in the biosynthesis of the osmoprotectant glycine betaine. It represses transcription of the choline transporter BetT and the genes of BetAB involved in the synthesis of glycine betaine. In Pseudomonas fluorescens (strain SBW25), this protein is HTH-type transcriptional regulator BetI.